Here is an 82-residue protein sequence, read N- to C-terminus: Putative membrane protein insertion efficiency factor (82 aa).

The protein belongs to the UPF0161 family.

The protein localises to the cell inner membrane. Could be involved in insertion of integral membrane proteins into the membrane. The sequence is that of Putative membrane protein insertion efficiency factor from Rickettsia massiliae (strain Mtu5).